Consider the following 116-residue polypeptide: Large ribosomal subunit protein bL19 (116 aa).

It belongs to the bacterial ribosomal protein bL19 family.

Functionally, this protein is located at the 30S-50S ribosomal subunit interface and may play a role in the structure and function of the aminoacyl-tRNA binding site. This Chloroflexus aurantiacus (strain ATCC 29366 / DSM 635 / J-10-fl) protein is Large ribosomal subunit protein bL19.